A 422-amino-acid polypeptide reads, in one-letter code: RNA exonuclease 4 (422 aa).

A disordered region spans residues 1-194 (MGKAKVPASK…APAPPTEEDI (194 aa)). Position 15 is a phosphoserine (Ser15). The segment covering 26–40 (LTRKKNKKKKRFWKS) has biased composition (basic residues). A phosphoserine mark is found at Ser96 and Ser111. Basic and acidic residues-rich tracts occupy residues 106–127 (NKKE…DQEA) and 151–176 (GTEH…DIEH). Lys115 is covalently cross-linked (Glycyl lysine isopeptide (Lys-Gly) (interchain with G-Cter in SUMO2)). The Exonuclease domain maps to 243–394 (ALALDCEMVG…QDAQAAMRLY (152 aa)).

It belongs to the REXO4 family. As to quaternary structure, can bind ESR1 and ESR2. This interaction is abrogated by estrogen and augmented by tamoxifen treatment.

The protein resides in the nucleus. It localises to the nucleolus. This Homo sapiens (Human) protein is RNA exonuclease 4 (REXO4).